Consider the following 556-residue polypeptide: Formate--tetrahydrofolate ligase (556 aa).

65-72 (TPAGEGKS) lines the ATP pocket.

This sequence belongs to the formate--tetrahydrofolate ligase family.

The catalysed reaction is (6S)-5,6,7,8-tetrahydrofolate + formate + ATP = (6R)-10-formyltetrahydrofolate + ADP + phosphate. The protein operates within one-carbon metabolism; tetrahydrofolate interconversion. The protein is Formate--tetrahydrofolate ligase of Streptococcus thermophilus (strain ATCC BAA-250 / LMG 18311).